The sequence spans 381 residues: MGGLRFGFVDALVHSRLPPTLPARSSMAAATVMGADSYWVGDHLNALVPRSIATSEYLGIAAKFVPKIDANYEPWTMLGNLAFGLPSRLRLGVCVTDAGRRNPAVTAQAAATLHLLTRGRAILGIGVGEREGNEPYGVEWTKPVARFEEALATIRALWNSNGELISRESPYFPLHNALFDLPPYRGKWPEIWVSAHGPRMLRATGRYADAWIPIVVVRPSDYSRALEAVRSAASDAGRDPMSITPAAVRGIITGRNRDDVEEALESVVVKMTALGVPGEAWARHGVEHPMGADFSGVQDIIPQTMDKQTVLSYAAKVPAALMKEVVFSGTPDEVIDQVAEWRDHGLRYVVLINGSLVNPSLRKTVTAVLPHAKVLRGLKKL.

This sequence belongs to the mer family. Phthiodiolone/phenolphthiodiolone dimycocerosates ketoreductase subfamily.

Catalyzes the reduction of the keto moiety of phthiodiolone dimycocerosates (DIM B) and glycosylated phenolphthiodiolone dimycocerosates to form the intermediate compounds phthiotriol and glycosylated phenolphthiotriol dimycocerosates during phthiocerol dimycocerosates (DIM A) and glycosylated phenolphthiocerol dimycocerosates (PGL) biosynthesis. The polypeptide is Phthiodiolone/phenolphthiodiolone dimycocerosates ketoreductase (Mycobacterium tuberculosis (strain CDC 1551 / Oshkosh)).